We begin with the raw amino-acid sequence, 859 residues long: MMSTKAFTLVPAIEREQLLSDRDRGLLECVECCGRNLYVGTSDCFVYHFLLEEKTLPGGSATFTATRQLHRHLGFKKAVSELRAASALSRLLVLCDGCISLVHMLSLEPVPSGARIKGATAFALNENPVSGDPFCVEVCIISVKRRTIQVFLVYEDRVQIVREVSTPEQPLAVAVDGHFLCLALTTQYIILNYSTGAAQDLFPFCSEERRPIVKRIGRQEFLLAGPGGLGMFATVAGISQRAPVRWSENVIGAAVCFPYVVALDDEFITVHSMLDQQQKQTLPFKEGHILQDFEGRVIVATSKGVYILVPLPLEKRIQDLLASHRVEEALVLAKGARRNIPKEKFQVMYRRILLQAGFIQFAQLQFLKAKELFRSGQLDVRELISLYPLLLPTSSSFTRSHPPLHEFADLNQLTQGDQDKVAKCKRFLMSYLNEVRSTEVANGYKEDIDTALLKLYAEADHDSLLDLLVTENFCLLPDSAAWLEKHKKYFALGLLYHYNHQDAAAVQLWVSIVNGDIQDSTRSDLYEYIVDFLTYSTDPDLVWRHADWVLQRSQEVGVQVFTKRPLDEQQSGFNPDDIISCLKKYPQALVKYLEHLVTERRLQKEEYHTHLAVLYLDEVLQQRPCTPDKDAEVTETQAKLRRLLQESDLYRVHFLMDRTRGAGLPLESAILHGKLEQHEEALHILVHELADFPAAEDYCLWRSEGRDPPYRQRLFHLLLAVYLGPGPAAPARTVAAVDLLNRHAVEFDAAQVLQLLPGTWSVQLLRPFLMGAMRDSIHARRTTQVAVGLARSENLIYKYDKMKLKGSSVRLSDEKLCQMCQNPFLEPVFVRYPNGGLVHTHCAASRHTEPSSPSAGART.

One can recognise a CNH domain in the interval 24-297 (RGLLECVECC…HILQDFEGRV (274 aa)). The CHCR repeat unit spans residues 563–727 (KRPLDEQQSG…LLAVYLGPGP (165 aa)).

It belongs to the TRAP1 family. As to quaternary structure, interacts with TGFBR2 and ACVR2B; in the absence of ligand stimulation. Interacts with TGFBR1, ACVRL1, BMPR1A and ACVR1B; in the absence of ligand stimulation and to a less extent. Interacts with SMAD4; the interaction seems to be mutually exclusive with the interaction of SMAD4 and phosphorylated SMAD2. May interact with ALOX5. Interacts with RAB5C. Interacts with VPS8, VPS11 and VPS16. Component of the putative class C core vacuole/endosome tethering (CORVET) complex; the core of which composed of the class C Vps proteins VPS11, VPS16, VPS18 and VPS33A, is associated with VPS8 and TGFBRAP1.

Its subcellular location is the cytoplasm. The protein localises to the early endosome. Functionally, plays a role in the TGF-beta/activin signaling pathway. It associates with inactive heteromeric TGF-beta and activin receptor complexes, mainly through the type II receptor, and is released upon activation of signaling. May recruit SMAD4 to the vicinity of the receptor complex and facilitate its interaction with receptor-regulated Smads, such as SMAD2. Its function is as follows. Plays a role in vesicle-mediated protein trafficking of the endocytic membrane transport pathway. Believed to act as a component of the putative CORVET endosomal tethering complexes which is proposed to be involved in the Rab5-to-Rab7 endosome conversion probably implicating MON1A/B, and via binding SNAREs and SNARE complexes to mediate tethering and docking events during SNARE-mediated membrane fusion. The CORVET complex is proposed to function as a Rab5 effector to mediate early endosome fusion probably in specific endosome subpopulations. Functions predominantly in APPL1-containing endosomes and in degradative but not recycling trafficking of endocytosed cargo. This is Transforming growth factor-beta receptor-associated protein 1 (TGFBRAP1) from Bos taurus (Bovine).